We begin with the raw amino-acid sequence, 174 residues long: MTIKPLIILPDPVLRQVSTPVETIDADIRRLADDMLETMYDAPGIGLAAIQIGVPKRLLVLDVTKEGEEKQPLVFINPKVVRSSEERSVYEEGCLSIPDYYAEVERPAAITVEYVDREGKEQAVEAEGLLATCLQHEIDHLNGVLFIDYISKLKRDMVIRRFTKAAKTRGAKAI.

C94 and H136 together coordinate Fe cation. Residue E137 is part of the active site. H140 is a Fe cation binding site.

Belongs to the polypeptide deformylase family. Fe(2+) is required as a cofactor.

It catalyses the reaction N-terminal N-formyl-L-methionyl-[peptide] + H2O = N-terminal L-methionyl-[peptide] + formate. Functionally, removes the formyl group from the N-terminal Met of newly synthesized proteins. Requires at least a dipeptide for an efficient rate of reaction. N-terminal L-methionine is a prerequisite for activity but the enzyme has broad specificity at other positions. The chain is Peptide deformylase from Rhizobium meliloti (strain 1021) (Ensifer meliloti).